The primary structure comprises 278 residues: Potassium/proton antiporter CemA (278 aa).

4 helical membrane passes run V61–G81, C154–I174, I203–I223, and F238–I258.

The protein belongs to the CemA family.

The protein resides in the plastid. It is found in the chloroplast inner membrane. The catalysed reaction is K(+)(in) + H(+)(out) = K(+)(out) + H(+)(in). Its function is as follows. Contributes to K(+)/H(+) antiport activity by supporting proton efflux to control proton extrusion and homeostasis in chloroplasts in a light-dependent manner to modulate photosynthesis. Prevents excessive induction of non-photochemical quenching (NPQ) under continuous-light conditions. Indirectly promotes efficient inorganic carbon uptake into chloroplasts. In Gracilaria tenuistipitata var. liui (Red alga), this protein is Potassium/proton antiporter CemA.